The following is a 539-amino-acid chain: Chaperonin GroEL (539 aa).

ATP-binding positions include 30-33 (TLGP), Lys-51, 87-91 (DGTTT), Gly-415, 479-481 (NAA), and Asp-495.

It belongs to the chaperonin (HSP60) family. As to quaternary structure, forms a cylinder of 14 subunits composed of two heptameric rings stacked back-to-back. Interacts with the co-chaperonin GroES.

It is found in the cytoplasm. It catalyses the reaction ATP + H2O + a folded polypeptide = ADP + phosphate + an unfolded polypeptide.. Together with its co-chaperonin GroES, plays an essential role in assisting protein folding. The GroEL-GroES system forms a nano-cage that allows encapsulation of the non-native substrate proteins and provides a physical environment optimized to promote and accelerate protein folding. The sequence is that of Chaperonin GroEL from Enterobacter agglomerans (Erwinia herbicola).